A 362-amino-acid polypeptide reads, in one-letter code: Probable dual-specificity RNA methyltransferase RlmN (362 aa).

Catalysis depends on Glu105, which acts as the Proton acceptor. One can recognise a Radical SAM core domain in the interval 111-344 (HEYGNSICVT…VTIRREQGHD (234 aa)). Cys118 and Cys349 are disulfide-bonded. The [4Fe-4S] cluster site is built by Cys125, Cys129, and Cys132. Residues 175–176 (GE), Ser207, 230–232 (SLH), and Asn306 contribute to the S-adenosyl-L-methionine site. The active-site S-methylcysteine intermediate is Cys349.

Belongs to the radical SAM superfamily. RlmN family. [4Fe-4S] cluster is required as a cofactor.

Its subcellular location is the cytoplasm. The enzyme catalyses adenosine(2503) in 23S rRNA + 2 reduced [2Fe-2S]-[ferredoxin] + 2 S-adenosyl-L-methionine = 2-methyladenosine(2503) in 23S rRNA + 5'-deoxyadenosine + L-methionine + 2 oxidized [2Fe-2S]-[ferredoxin] + S-adenosyl-L-homocysteine. The catalysed reaction is adenosine(37) in tRNA + 2 reduced [2Fe-2S]-[ferredoxin] + 2 S-adenosyl-L-methionine = 2-methyladenosine(37) in tRNA + 5'-deoxyadenosine + L-methionine + 2 oxidized [2Fe-2S]-[ferredoxin] + S-adenosyl-L-homocysteine. Specifically methylates position 2 of adenine 2503 in 23S rRNA and position 2 of adenine 37 in tRNAs. This chain is Probable dual-specificity RNA methyltransferase RlmN, found in Bacillus cereus (strain ATCC 14579 / DSM 31 / CCUG 7414 / JCM 2152 / NBRC 15305 / NCIMB 9373 / NCTC 2599 / NRRL B-3711).